Reading from the N-terminus, the 288-residue chain is Store-operated calcium entry regulator STIMATE (288 aa).

Topologically, residues 1-28 (MQGPGGNVSRGLPGGPASTVASGAGRCE) are cytoplasmic. Helical transmembrane passes span 29–49 (SGAL…VVAF), 69–89 (IWFL…FANV), and 102–122 (LYLI…YVGV). The GXXXG motif signature appears at 149 to 153 (GAWVG). The next 2 helical transmembrane spans lie at 156–176 (ALYI…LLIL) and 194–214 (LAIV…WVVD). Residues 215-288 (NFLMRKGKTK…KKKHRFGLPV (74 aa)) are Cytoplasmic-facing. The interval 228-288 (EERGANQDSR…KKKHRFGLPV (61 aa)) is disordered. Residues 241 to 246 (KVRYRR) form a required for localization in the endoplasmic reticulum region. Residues 261–272 (ADDEMEESDAEE) show a composition bias toward acidic residues. Residues 277–288 (PVKKKHRFGLPV) are compositionally biased toward basic residues.

The protein belongs to the STIMATE family. Homooligomer. Interacts with STIM1.

The protein resides in the endoplasmic reticulum membrane. Functionally, acts as a regulator of store-operated Ca(2+) entry (SOCE) at junctional sites that connect the endoplasmic reticulum (ER) and plasma membrane (PM), called ER-plasma membrane (ER-PM) junction or cortical ER. SOCE is a Ca(2+) influx following depletion of intracellular Ca(2+) stores. Acts by interacting with STIM1, promoting STIM1 conformational switch. Involved in STIM1 relocalization to ER-PM junctions. Contributes to the maintenance and reorganization of store-dependent ER-PM junctions. This chain is Store-operated calcium entry regulator STIMATE, found in Rattus norvegicus (Rat).